The chain runs to 429 residues: Adenylosuccinate synthetase (429 aa).

Residues 12 to 18 and 40 to 42 each bind GTP; these read GDEGKGK and GHT. Aspartate 13 (proton acceptor) is an active-site residue. Mg(2+) is bound by residues aspartate 13 and glycine 40. Residues 13–16, 38–41, threonine 129, arginine 143, glutamine 223, threonine 238, and arginine 302 contribute to the IMP site; these read DEGK and NAGH. The active-site Proton donor is histidine 41. Substrate is bound at residue 298 to 304; sequence VVTGRKR. GTP contacts are provided by residues arginine 304, 330–332, and 412–414; these read KLD and STS.

Belongs to the adenylosuccinate synthetase family. As to quaternary structure, homodimer. It depends on Mg(2+) as a cofactor.

It localises to the cytoplasm. It carries out the reaction IMP + L-aspartate + GTP = N(6)-(1,2-dicarboxyethyl)-AMP + GDP + phosphate + 2 H(+). Its pathway is purine metabolism; AMP biosynthesis via de novo pathway; AMP from IMP: step 1/2. Plays an important role in the de novo pathway of purine nucleotide biosynthesis. Catalyzes the first committed step in the biosynthesis of AMP from IMP. This chain is Adenylosuccinate synthetase, found in Brucella abortus (strain 2308).